Reading from the N-terminus, the 150-residue chain is Large ribosomal subunit protein bL9 (150 aa).

This sequence belongs to the bacterial ribosomal protein bL9 family.

Binds to the 23S rRNA. In Corynebacterium glutamicum (strain R), this protein is Large ribosomal subunit protein bL9.